The chain runs to 144 residues: Transcriptional regulator SlyA (144 aa).

The HTH marR-type domain maps to 2–135; it reads ESPLGSDLAR…LIKLIAKLEH (134 aa). Residues 49–72 constitute a DNA-binding region (H-T-H motif); sequence QIQLAKAIGIEQPSLVRTLDQLEE.

This sequence belongs to the SlyA family. As to quaternary structure, homodimer.

Functionally, transcription regulator that can specifically activate or repress expression of target genes. This Escherichia coli O127:H6 (strain E2348/69 / EPEC) protein is Transcriptional regulator SlyA.